The sequence spans 255 residues: 1-acyl-sn-glycerol-3-phosphate acyltransferase (255 aa).

Residues 78 to 83 (HVSWLD) carry the HXXXXD motif motif.

Belongs to the 1-acyl-sn-glycerol-3-phosphate acyltransferase family.

It is found in the cell inner membrane. It catalyses the reaction a 1-acyl-sn-glycero-3-phosphate + an acyl-CoA = a 1,2-diacyl-sn-glycero-3-phosphate + CoA. It participates in phospholipid metabolism; CDP-diacylglycerol biosynthesis; CDP-diacylglycerol from sn-glycerol 3-phosphate: step 2/3. Its function is as follows. Converts lysophosphatidic acid (LPA) into phosphatidic acid by incorporating acyl moiety at the 2 position. In Neisseria meningitidis serogroup B (strain ATCC BAA-335 / MC58), this protein is 1-acyl-sn-glycerol-3-phosphate acyltransferase (plsC).